A 392-amino-acid polypeptide reads, in one-letter code: Flagellar P-ring protein (392 aa).

An N-terminal signal peptide occupies residues 1–38 (MKPFARRALLTAEPIRALLLAASLLAATLGLMPAEAFG).

Belongs to the FlgI family. As to quaternary structure, the basal body constitutes a major portion of the flagellar organelle and consists of four rings (L,P,S, and M) mounted on a central rod.

The protein localises to the periplasm. The protein resides in the bacterial flagellum basal body. In terms of biological role, assembles around the rod to form the L-ring and probably protects the motor/basal body from shearing forces during rotation. This Paramagnetospirillum magneticum (strain ATCC 700264 / AMB-1) (Magnetospirillum magneticum) protein is Flagellar P-ring protein.